We begin with the raw amino-acid sequence, 270 residues long: Small ribosomal subunit protein eS1 (270 aa).

2 disordered regions span residues 1-21 (MAVGKNKGTSKGGKKGSKKKV) and 238-270 (GGGKGAEVSTGAAEGGVTIDRPEGYEPPVQESV).

It belongs to the eukaryotic ribosomal protein eS1 family. In terms of assembly, component of the small ribosomal subunit. Mature ribosomes consist of a small (40S) and a large (60S) subunit. The 40S subunit contains about 33 different proteins and 1 molecule of RNA (18S). The 60S subunit contains about 49 different proteins and 3 molecules of RNA (28S, 5.8S and 5S).

The protein resides in the cytoplasm. This Aedes aegypti (Yellowfever mosquito) protein is Small ribosomal subunit protein eS1.